The primary structure comprises 354 residues: Nucleoporin seh1 (354 aa).

WD repeat units follow at residues 10 to 49, 55 to 96, 112 to 153, 161 to 209, 216 to 259, and 270 to 309; these read DHKD…KWNV, AHSG…KVSS, DSRT…NLSQ, SNKL…RKCV, DITD…TDIS, and EHNC…QWRC.

This sequence belongs to the WD repeat SEC13 family. As to quaternary structure, probable component of the nuclear pore complex (NPC). Component of the GATOR complex consisting of mio, Nup44A/Seh1, Im11, Nplr3, Nplr2, Wdr24, Wdr59 and Sec13. Within the GATOR complex, probable component of the GATOR2 subcomplex which is likely composed of mio, Nup44A/Seh1, Wdr24, Wdr59 and Sec13. Interacts with mio. Interacts with Wdr24. The GATOR2 complex associates with unmet in the absence of S-adenosyl-L-methionine; the mio-Wdr24-Nup44A subcomplex is essential and sufficient for this interaction while Wdr59 and Sec13 are dispensable. This association acts as a nutrient sensor to inhibit mTORC1 signaling in the absence of methionine. In terms of tissue distribution, expressed in ovarian cysts.

The protein localises to the nucleus envelope. The protein resides in the lysosome. Functionally, probable component of the nuclear pore complex (NPC). Involved in maintaining the localization of another nucleoporin Mgtor to the nuclear envelope of early meiotic female germline cells. It is not involved in recruiting the nucleoporins Mgtor, Nup107, Nup153 and FG-containing nucleoporins to the NPC. An essential component of the GATOR subcomplex GATOR2 which functions as an activator of the amino acid-sensing branch of the mTORC1 signaling pathway. The two GATOR subcomplexes, GATOR1 and GATOR2, regulate the mTORC1 pathway in order to mediate metabolic homeostasis, female gametogenesis and the response to amino acid limitation and complete starvation. GATOR2 activates the mTORC1 signaling pathway through the inhibition of the GATOR1 subcomplex, controlling the switch to cell proliferation growth under nutrient replete conditions and growth during female oocyte development. This component is required for activating mTORC1 specifically in germline cells to promote cell growth and maintain the oocyte fate, probably influences the organization and/or function of microtubules within ovarian cysts, and promotes accumulation of another GATOR2 complex member mio in germline and somatic tissues. GATOR1 and GATOR2 act at different stages of oogenesis to regulate mTORC1 in order to control meiotic entry and promote oocyte growth and development. After exactly four mitotic cyst divisions, the GATOR1 complex members (Iml1, Nprl2 and Nprl3) down-regulate mTORC1 to slow cellular metabolism and promote the mitotic/meiotic transition. At later stages of oogenesis, the mio and Nup44A components of the GATOR2 complex inhibit GATOR1 and thus activate mTORC1 to promote meiotic progression, and drive oocyte growth and development. In addition to its role in the regulation of the mTORC1 complex, functions independently of mTORC1 to prevent the inappropriate accumulation of autolysosomes in germline tissues. This chain is Nucleoporin seh1, found in Drosophila melanogaster (Fruit fly).